The following is a 265-amino-acid chain: Adenosylcobinamide-GDP ribazoletransferase (265 aa).

The next 7 helical transmembrane spans lie at 40 to 60, 67 to 87, 121 to 141, 150 to 170, 191 to 211, 213 to 233, and 243 to 263; these read IAYA…VVLV, LPAF…TGAF, GGCA…ALVA, LALV…LLAL, LACA…GFGI, TAFA…RLSG, and VAGA…LIFP.

Belongs to the CobS family. Mg(2+) serves as cofactor.

The protein resides in the cell inner membrane. The catalysed reaction is alpha-ribazole + adenosylcob(III)inamide-GDP = adenosylcob(III)alamin + GMP + H(+). The enzyme catalyses alpha-ribazole 5'-phosphate + adenosylcob(III)inamide-GDP = adenosylcob(III)alamin 5'-phosphate + GMP + H(+). It functions in the pathway cofactor biosynthesis; adenosylcobalamin biosynthesis; adenosylcobalamin from cob(II)yrinate a,c-diamide: step 7/7. In terms of biological role, joins adenosylcobinamide-GDP and alpha-ribazole to generate adenosylcobalamin (Ado-cobalamin). Also synthesizes adenosylcobalamin 5'-phosphate from adenosylcobinamide-GDP and alpha-ribazole 5'-phosphate. The polypeptide is Adenosylcobinamide-GDP ribazoletransferase (Xanthobacter autotrophicus (strain ATCC BAA-1158 / Py2)).